The following is a 30-amino-acid chain: Thylakoid lumenal 13.3 kDa protein (30 aa).

It localises to the plastid. The protein resides in the chloroplast thylakoid lumen. The protein is Thylakoid lumenal 13.3 kDa protein of Spinacia oleracea (Spinach).